A 285-amino-acid polypeptide reads, in one-letter code: Nucleotide-binding protein PSPPH_4154 (285 aa).

8–15 (GRSGSGKS) serves as a coordination point for ATP. 60 to 63 (DARN) lines the GTP pocket.

This sequence belongs to the RapZ-like family.

Its function is as follows. Displays ATPase and GTPase activities. In Pseudomonas savastanoi pv. phaseolicola (strain 1448A / Race 6) (Pseudomonas syringae pv. phaseolicola (strain 1448A / Race 6)), this protein is Nucleotide-binding protein PSPPH_4154.